The primary structure comprises 179 residues: Photosystem I assembly protein Ycf4 (179 aa).

2 helical membrane-spanning segments follow: residues 21–41 (LISFSGGIGFLLAGLSSYLGV) and 59–79 (IVMTFYGTIGILLSLFLLLNI).

This sequence belongs to the Ycf4 family.

It localises to the plastid. The protein localises to the chloroplast thylakoid membrane. Functionally, seems to be required for the assembly of the photosystem I complex. This Rhodomonas salina (Cryptomonas salina) protein is Photosystem I assembly protein Ycf4.